Consider the following 219-residue polypeptide: Thymidylate kinase (219 aa).

9–16 lines the ATP pocket; the sequence is GIEGSGKT.

Belongs to the thymidylate kinase family.

It catalyses the reaction dTMP + ATP = dTDP + ADP. Phosphorylation of dTMP to form dTDP in both de novo and salvage pathways of dTTP synthesis. This chain is Thymidylate kinase, found in Pelobacter propionicus (strain DSM 2379 / NBRC 103807 / OttBd1).